Consider the following 357-residue polypeptide: Fructose-bisphosphate aldolase, cytoplasmic isozyme (357 aa).

The substrate site is built by R53 and K142. E183 acts as the Proton acceptor in catalysis. K225 functions as the Schiff-base intermediate with dihydroxyacetone-P in the catalytic mechanism.

This sequence belongs to the class I fructose-bisphosphate aldolase family.

It is found in the cytoplasm. The enzyme catalyses beta-D-fructose 1,6-bisphosphate = D-glyceraldehyde 3-phosphate + dihydroxyacetone phosphate. Its pathway is carbohydrate degradation; glycolysis; D-glyceraldehyde 3-phosphate and glycerone phosphate from D-glucose: step 4/4. The protein is Fructose-bisphosphate aldolase, cytoplasmic isozyme of Spinacia oleracea (Spinach).